The chain runs to 76 residues: Esculentin-2MT2 (76 aa).

Positions 1-22 (MFTLKKSMLLLFFLGTISLSLC) are cleaved as a signal peptide. Residues 23–37 (EEERSADEDDGEKEV) constitute a propeptide, removed in mature form. Cys-70 and Cys-76 are oxidised to a cystine.

It belongs to the frog skin active peptide (FSAP) family. Esculentin subfamily. Expressed by the skin glands.

The protein resides in the secreted. Antimicrobial peptide. Active against a variety of Gram-negative and Gram-positive bacterial strains. Active against fungi. Shows strong hemolytic activity against human erythrocytes. The polypeptide is Esculentin-2MT2 (Amolops mantzorum (Sichuan torrent frog)).